We begin with the raw amino-acid sequence, 87 residues long: Anaphase-promoting complex subunit 11 (87 aa).

An RING-type; atypical zinc finger spans residues 35 to 77 (CVDCKIPGDDCPPVWGVCNHAFHMHCILKWLNANELQQCPMCR).

The protein belongs to the RING-box family. In terms of assembly, the APC/C is composed of at least 13 subunits that stay tightly associated throughout the cell cycle: anapc1, anapc2, anapc3, anapc4, anapc5, anapc6, anapc7, anapc8, anapc10, anapc11, cdc20, cdc26 and cdh1.

The protein resides in the nucleus. Its pathway is protein modification; protein ubiquitination. Component of the anaphase promoting complex/cyclosome (APC/C), a cell cycle-regulated E3 ubiquitin-protein ligase complex that controls progression through mitosis and the G1 phase of the cell cycle. This is Anaphase-promoting complex subunit 11 (anapc11) from Dictyostelium discoideum (Social amoeba).